Reading from the N-terminus, the 228-residue chain is MGQKVHPNGIRLGIVKEHTSVWYADRKNYADYLFADLKVREYLQDKLKSASVSRIDIHRPAQTARITIHTARPGIVIGKKGEDVEKLRQDLTKQMGVPVHINIEEIRKPELDAMLVAQSVAQQLERRVMFRRAMKRAVQNAMRIGAKGIKIQVSGRLGGAEIARTEWYREGRVPLHTLRADIDYATYEAHTTYGVIGVKVWIFKGEVIGGRQEELKPVAPAPRKKAAR.

The KH type-2 domain maps to 39 to 107 (VREYLQDKLK…PVHINIEEIR (69 aa)).

This sequence belongs to the universal ribosomal protein uS3 family. Part of the 30S ribosomal subunit. Forms a tight complex with proteins S10 and S14.

Functionally, binds the lower part of the 30S subunit head. Binds mRNA in the 70S ribosome, positioning it for translation. The protein is Small ribosomal subunit protein uS3 of Pseudomonas aeruginosa (strain UCBPP-PA14).